The chain runs to 533 residues: CTP synthase (533 aa).

The segment at 1 to 270 (MVHLAKYIVV…GDYIVRRIEL (270 aa)) is amidoligase domain. Serine 16 serves as a coordination point for CTP. A UTP-binding site is contributed by serine 16. Residue 17-22 (SIGKGI) participates in ATP binding. Tyrosine 57 lines the L-glutamine pocket. Residue aspartate 74 participates in ATP binding. Positions 74 and 144 each coordinate Mg(2+). Residues 151-153 (DIE), 191-196 (KTKPTQ), and lysine 227 contribute to the CTP site. Residues 191–196 (KTKPTQ) and lysine 227 each bind UTP. One can recognise a Glutamine amidotransferase type-1 domain in the interval 303-533 (YVELEDSYIS…FLRAALERSR (231 aa)). Residue glycine 355 coordinates L-glutamine. Cysteine 382 serves as the catalytic Nucleophile; for glutamine hydrolysis. L-glutamine-binding positions include 383–386 (LGMQ), glutamate 405, and arginine 462. Residues histidine 507 and glutamate 509 contribute to the active site.

This sequence belongs to the CTP synthase family. As to quaternary structure, homotetramer.

The catalysed reaction is UTP + L-glutamine + ATP + H2O = CTP + L-glutamate + ADP + phosphate + 2 H(+). The enzyme catalyses L-glutamine + H2O = L-glutamate + NH4(+). It carries out the reaction UTP + NH4(+) + ATP = CTP + ADP + phosphate + 2 H(+). It participates in pyrimidine metabolism; CTP biosynthesis via de novo pathway; CTP from UDP: step 2/2. Allosterically activated by GTP, when glutamine is the substrate; GTP has no effect on the reaction when ammonia is the substrate. The allosteric effector GTP functions by stabilizing the protein conformation that binds the tetrahedral intermediate(s) formed during glutamine hydrolysis. Inhibited by the product CTP, via allosteric rather than competitive inhibition. Functionally, catalyzes the ATP-dependent amination of UTP to CTP with either L-glutamine or ammonia as the source of nitrogen. Regulates intracellular CTP levels through interactions with the four ribonucleotide triphosphates. This chain is CTP synthase, found in Methanothermobacter thermautotrophicus (strain ATCC 29096 / DSM 1053 / JCM 10044 / NBRC 100330 / Delta H) (Methanobacterium thermoautotrophicum).